We begin with the raw amino-acid sequence, 189 residues long: ATP-dependent protease subunit HslV (189 aa).

Residue T12 is part of the active site. Positions 172, 175, and 178 each coordinate Na(+).

It belongs to the peptidase T1B family. HslV subfamily. As to quaternary structure, a double ring-shaped homohexamer of HslV is capped on each side by a ring-shaped HslU homohexamer. The assembly of the HslU/HslV complex is dependent on binding of ATP.

The protein resides in the cytoplasm. The enzyme catalyses ATP-dependent cleavage of peptide bonds with broad specificity.. Its activity is regulated as follows. Allosterically activated by HslU binding. Protease subunit of a proteasome-like degradation complex believed to be a general protein degrading machinery. This Ehrlichia canis (strain Jake) protein is ATP-dependent protease subunit HslV.